The sequence spans 256 residues: Pimeloyl-[acyl-carrier protein] methyl ester esterase (256 aa).

The AB hydrolase-1 domain maps to 15 to 242 (HLVLLHGWGL…AAHAPFISHP (228 aa)). Substrate-binding positions include W22, 82–83 (SL), and 143–147 (FLALQ). Catalysis depends on S82, which acts as the Nucleophile. Catalysis depends on residues D207 and H235. H235 is a substrate binding site.

It belongs to the AB hydrolase superfamily. Carboxylesterase BioH family. In terms of assembly, monomer.

The protein localises to the cytoplasm. It catalyses the reaction 6-carboxyhexanoyl-[ACP] methyl ester + H2O = 6-carboxyhexanoyl-[ACP] + methanol + H(+). It participates in cofactor biosynthesis; biotin biosynthesis. Functionally, the physiological role of BioH is to remove the methyl group introduced by BioC when the pimeloyl moiety is complete. It allows to synthesize pimeloyl-ACP via the fatty acid synthetic pathway through the hydrolysis of the ester bonds of pimeloyl-ACP esters. This Shigella dysenteriae serotype 1 (strain Sd197) protein is Pimeloyl-[acyl-carrier protein] methyl ester esterase.